A 433-amino-acid polypeptide reads, in one-letter code: Legumain (433 aa).

The first 17 residues, M1–A17, serve as a signal peptide directing secretion. Positions V18 to D25 are excised as a propeptide. The N-linked (GlcNAc...) asparagine glycan is linked to N91. The active site involves H148. An N-linked (GlcNAc...) asparagine glycan is attached at N167. C189 functions as the Nucleophile in the catalytic mechanism. N-linked (GlcNAc...) asparagine glycans are attached at residues N263 and N272. Residues D324 to Y433 constitute a propeptide that is removed on maturation. 2 cysteine pairs are disulfide-bonded: C378–C412 and C390–C429.

Belongs to the peptidase C13 family. As to quaternary structure, homodimer before autocatalytic removal of the propeptide. Monomer after autocatalytic processing. May interact with integrins. Post-translationally, activated by autocatalytic processing at pH 4. As to expression, detected in kidney (at protein level).

Its subcellular location is the lysosome. It carries out the reaction Hydrolysis of proteins and small molecule substrates at -Asn-|-Xaa- bonds.. Has a strict specificity for hydrolysis of asparaginyl bonds. Can also cleave aspartyl bonds slowly, especially under acidic conditions. Involved in the processing of proteins for MHC class II antigen presentation in the lysosomal/endosomal system. Also involved in MHC class I antigen presentation in cross-presenting dendritic cells by mediating cleavage and maturation of Perforin-2 (MPEG1), thereby promoting antigen translocation in the cytosol. Required for normal lysosomal protein degradation in renal proximal tubules. Required for normal degradation of internalized EGFR. Plays a role in the regulation of cell proliferation via its role in EGFR degradation. The sequence is that of Legumain (LGMN) from Bos taurus (Bovine).